We begin with the raw amino-acid sequence, 327 residues long: Serine/threonine-protein phosphatase PP1-beta catalytic subunit (327 aa).

Position 2 is an N-acetylalanine (Ala-2). Mn(2+)-binding residues include Asp-63, His-65, Asp-91, and Asn-123. His-124 acts as the Proton donor in catalysis. Residues His-172 and His-247 each coordinate Mn(2+). A disordered region spans residues 305 to 327 (QYGGLNSGRPVTPPRTANPPKKR).

It belongs to the PPP phosphatase family. PP-1 subfamily. Mn(2+) serves as cofactor.

The protein resides in the cytoplasm. It is found in the nucleus. It catalyses the reaction O-phospho-L-seryl-[protein] + H2O = L-seryl-[protein] + phosphate. The catalysed reaction is O-phospho-L-threonyl-[protein] + H2O = L-threonyl-[protein] + phosphate. In terms of biological role, protein phosphatase that associates with over 200 regulatory proteins to form highly specific holoenzymes which dephosphorylate hundreds of biological targets. Protein phosphatase (PP1) is essential for cell division, it participates in the regulation of glycogen metabolism, muscle contractility and protein synthesis. Involved in regulation of ionic conductances and long-term synaptic plasticity. The protein is Serine/threonine-protein phosphatase PP1-beta catalytic subunit (ppp1cb) of Xenopus laevis (African clawed frog).